Here is a 215-residue protein sequence, read N- to C-terminus: ATP phosphoribosyltransferase (215 aa).

This sequence belongs to the ATP phosphoribosyltransferase family. Short subfamily. As to quaternary structure, heteromultimer composed of HisG and HisZ subunits.

It localises to the cytoplasm. It carries out the reaction 1-(5-phospho-beta-D-ribosyl)-ATP + diphosphate = 5-phospho-alpha-D-ribose 1-diphosphate + ATP. It participates in amino-acid biosynthesis; L-histidine biosynthesis; L-histidine from 5-phospho-alpha-D-ribose 1-diphosphate: step 1/9. Its function is as follows. Catalyzes the condensation of ATP and 5-phosphoribose 1-diphosphate to form N'-(5'-phosphoribosyl)-ATP (PR-ATP). Has a crucial role in the pathway because the rate of histidine biosynthesis seems to be controlled primarily by regulation of HisG enzymatic activity. In Prochlorococcus marinus subsp. pastoris (strain CCMP1986 / NIES-2087 / MED4), this protein is ATP phosphoribosyltransferase.